A 261-amino-acid polypeptide reads, in one-letter code: MKVQQEAVNVLERTSAYLKSGILKKTPAWYNVIAKVPPTKKFARTPQLTHPMNGKSRTALPDYSNWKANSSGLYKTRPNSLEKKDGASKLYQSPKLVYIEDKLRKLFFQQHPWELSRPKILVENTLETQEYDWSHIQQLGKPLDGESVVQRTLFLLKSGEKKELIDAYDQARFEFYRLRIQQEIQDQVAQEEAEMFGSVFHTTSIEYGIAKEQKVIDTWKRKALQQAELMAARASSPSASWTNETEEEQKPIDQDVEEIQL.

The segment at 233-261 (RASSPSASWTNETEEEQKPIDQDVEEIQL) is disordered.

The protein belongs to the mitochondrion-specific ribosomal protein mS23 family. As to quaternary structure, component of the mitochondrial small ribosomal subunit.

Its subcellular location is the mitochondrion. This Kluyveromyces lactis (strain ATCC 8585 / CBS 2359 / DSM 70799 / NBRC 1267 / NRRL Y-1140 / WM37) (Yeast) protein is Small ribosomal subunit protein mS23 (RSM25).